The chain runs to 306 residues: Aspartate carbamoyltransferase catalytic subunit (306 aa).

Arg55 and Thr56 together coordinate carbamoyl phosphate. Lys84 provides a ligand contact to L-aspartate. 3 residues coordinate carbamoyl phosphate: Arg105, His133, and Gln136. Residues Arg166 and Arg227 each coordinate L-aspartate. Positions 265 and 266 each coordinate carbamoyl phosphate.

It belongs to the aspartate/ornithine carbamoyltransferase superfamily. ATCase family. Heterododecamer (2C3:3R2) of six catalytic PyrB chains organized as two trimers (C3), and six regulatory PyrI chains organized as three dimers (R2).

It catalyses the reaction carbamoyl phosphate + L-aspartate = N-carbamoyl-L-aspartate + phosphate + H(+). The protein operates within pyrimidine metabolism; UMP biosynthesis via de novo pathway; (S)-dihydroorotate from bicarbonate: step 2/3. Catalyzes the condensation of carbamoyl phosphate and aspartate to form carbamoyl aspartate and inorganic phosphate, the committed step in the de novo pyrimidine nucleotide biosynthesis pathway. In Neisseria meningitidis serogroup C / serotype 2a (strain ATCC 700532 / DSM 15464 / FAM18), this protein is Aspartate carbamoyltransferase catalytic subunit.